The following is a 273-amino-acid chain: Eukaryotic translation initiation factor 3 subunit J (273 aa).

Residues 1–158 (MPTKKWEDEE…DPSDPSKTVE (158 aa)) are disordered. Residues 34-54 (DEEANDSDVLDSWDAAEDSEV) show a composition bias toward acidic residues. The stretch at 50-97 (EDSEVEREKAKKAAEAKAKAEAEAKANKKTKAARINEHKQRRKEAEES) forms a coiled coil. Residues 55-75 (EREKAKKAAEAKAKAEAEAKA) show a composition bias toward basic and acidic residues. Positions 95-104 (EESDESDDET) are enriched in acidic residues. Residues 105 to 126 (ESQRRERLRRTEKEADLAHAED) are compositionally biased toward basic and acidic residues.

It belongs to the eIF-3 subunit J family. In terms of assembly, component of the eukaryotic translation initiation factor 3 (eIF-3) complex.

The protein resides in the cytoplasm. In terms of biological role, component of the eukaryotic translation initiation factor 3 (eIF-3) complex, which is involved in protein synthesis of a specialized repertoire of mRNAs and, together with other initiation factors, stimulates binding of mRNA and methionyl-tRNAi to the 40S ribosome. The eIF-3 complex specifically targets and initiates translation of a subset of mRNAs involved in cell proliferation. This chain is Eukaryotic translation initiation factor 3 subunit J, found in Pyricularia oryzae (strain 70-15 / ATCC MYA-4617 / FGSC 8958) (Rice blast fungus).